The primary structure comprises 542 residues: NAD-dependent deacetylase sir2D (542 aa).

Disordered stretches follow at residues 1–37 and 136–160; these read MNKR…NTPL and ETST…TTTT. Residues 8 to 25 show a composition bias toward low complexity; the sequence is NNELNEIQNNQNKNNNNK. A coiled-coil region spans residues 165-193; the sequence is NETILLDILNNNKDEVDDEIQRIGNNVGN. The 260-residue stretch at 283–542 folds into the Deacetylase sirtuin-type domain; that stretch reads ATLDLSTFEK…VQDLLNKVKW (260 aa). H411 (proton acceptor) is an active-site residue. The Zn(2+) site is built by C419, C422, C443, and C446.

The protein belongs to the sirtuin family. The cofactor is Zn(2+).

It carries out the reaction N(6)-acetyl-L-lysyl-[protein] + NAD(+) + H2O = 2''-O-acetyl-ADP-D-ribose + nicotinamide + L-lysyl-[protein]. In terms of biological role, NAD-dependent deacetylase, which plays an important role in the regulation of transcriptional repression. In Dictyostelium discoideum (Social amoeba), this protein is NAD-dependent deacetylase sir2D (sir2D).